The following is a 413-amino-acid chain: Phosphopentomutase (413 aa).

Mn(2+) contacts are provided by Asp11, Asp306, His311, Asp347, His348, and His359.

It belongs to the phosphopentomutase family. Mn(2+) serves as cofactor.

It localises to the cytoplasm. It catalyses the reaction 2-deoxy-alpha-D-ribose 1-phosphate = 2-deoxy-D-ribose 5-phosphate. The catalysed reaction is alpha-D-ribose 1-phosphate = D-ribose 5-phosphate. It functions in the pathway carbohydrate degradation; 2-deoxy-D-ribose 1-phosphate degradation; D-glyceraldehyde 3-phosphate and acetaldehyde from 2-deoxy-alpha-D-ribose 1-phosphate: step 1/2. Its function is as follows. Isomerase that catalyzes the conversion of deoxy-ribose 1-phosphate (dRib-1-P) and ribose 1-phosphate (Rib-1-P) to deoxy-ribose 5-phosphate (dRib-5-P) and ribose 5-phosphate (Rib-5-P), respectively. The sequence is that of Phosphopentomutase from Helicobacter pylori (strain G27).